The sequence spans 360 residues: Phospho-N-acetylmuramoyl-pentapeptide-transferase (360 aa).

Helical transmembrane passes span 26–46 (AILG…AMIR), 70–90 (GTPT…TLLW), 97–117 (FVWV…IDDY), 134–154 (FFWQ…TAQA), 168–188 (VAIQ…VGAS), 199–219 (GLAI…AYLS), 236–256 (VGDL…FLWF), 263–283 (VFMG…LAVV), 288–308 (IVLV…IMQV), and 338–358 (VIVR…ATLK).

This sequence belongs to the glycosyltransferase 4 family. MraY subfamily. Mg(2+) serves as cofactor.

It is found in the cell inner membrane. The enzyme catalyses UDP-N-acetyl-alpha-D-muramoyl-L-alanyl-gamma-D-glutamyl-meso-2,6-diaminopimeloyl-D-alanyl-D-alanine + di-trans,octa-cis-undecaprenyl phosphate = di-trans,octa-cis-undecaprenyl diphospho-N-acetyl-alpha-D-muramoyl-L-alanyl-D-glutamyl-meso-2,6-diaminopimeloyl-D-alanyl-D-alanine + UMP. Its pathway is cell wall biogenesis; peptidoglycan biosynthesis. Catalyzes the initial step of the lipid cycle reactions in the biosynthesis of the cell wall peptidoglycan: transfers peptidoglycan precursor phospho-MurNAc-pentapeptide from UDP-MurNAc-pentapeptide onto the lipid carrier undecaprenyl phosphate, yielding undecaprenyl-pyrophosphoryl-MurNAc-pentapeptide, known as lipid I. This Thioalkalivibrio sulfidiphilus (strain HL-EbGR7) protein is Phospho-N-acetylmuramoyl-pentapeptide-transferase.